We begin with the raw amino-acid sequence, 335 residues long: Anthranilate phosphoribosyltransferase (335 aa).

Residues Gly-79, 82-83 (GD), Thr-87, 89-92 (NIST), 107-115 (KHGSRSVSS), and Ser-119 contribute to the 5-phospho-alpha-D-ribose 1-diphosphate site. Gly-79 contributes to the anthranilate binding site. Mg(2+) is bound at residue Ser-91. An anthranilate-binding site is contributed by Arg-165. Mg(2+)-binding residues include Asp-223 and Glu-224.

Belongs to the anthranilate phosphoribosyltransferase family. In terms of assembly, homodimer. The cofactor is Mg(2+).

The enzyme catalyses N-(5-phospho-beta-D-ribosyl)anthranilate + diphosphate = 5-phospho-alpha-D-ribose 1-diphosphate + anthranilate. Its pathway is amino-acid biosynthesis; L-tryptophan biosynthesis; L-tryptophan from chorismate: step 2/5. Functionally, catalyzes the transfer of the phosphoribosyl group of 5-phosphorylribose-1-pyrophosphate (PRPP) to anthranilate to yield N-(5'-phosphoribosyl)-anthranilate (PRA). The chain is Anthranilate phosphoribosyltransferase from Helicobacter pylori (strain Shi470).